Here is a 469-residue protein sequence, read N- to C-terminus: 3-isopropylmalate dehydratase large subunit (469 aa).

[4Fe-4S] cluster-binding residues include cysteine 350, cysteine 410, and cysteine 413.

The protein belongs to the aconitase/IPM isomerase family. LeuC type 1 subfamily. As to quaternary structure, heterodimer of LeuC and LeuD. [4Fe-4S] cluster is required as a cofactor.

The catalysed reaction is (2R,3S)-3-isopropylmalate = (2S)-2-isopropylmalate. Its pathway is amino-acid biosynthesis; L-leucine biosynthesis; L-leucine from 3-methyl-2-oxobutanoate: step 2/4. Its function is as follows. Catalyzes the isomerization between 2-isopropylmalate and 3-isopropylmalate, via the formation of 2-isopropylmaleate. This is 3-isopropylmalate dehydratase large subunit from Rhizobium johnstonii (strain DSM 114642 / LMG 32736 / 3841) (Rhizobium leguminosarum bv. viciae).